The chain runs to 332 residues: DNA-directed RNA polymerase subunit alpha (332 aa).

The interval 1–227 (MKKFAETPFL…VMYSQMSVFN (227 aa)) is alpha N-terminal domain (alpha-NTD). The tract at residues 248–332 (KELVIRIDDL…LRRKLEQLKA (85 aa)) is alpha C-terminal domain (alpha-CTD).

This sequence belongs to the RNA polymerase alpha chain family. Homodimer. The RNAP catalytic core consists of 2 alpha, 1 beta, 1 beta' and 1 omega subunit. When a sigma factor is associated with the core the holoenzyme is formed, which can initiate transcription.

The catalysed reaction is RNA(n) + a ribonucleoside 5'-triphosphate = RNA(n+1) + diphosphate. In terms of biological role, DNA-dependent RNA polymerase catalyzes the transcription of DNA into RNA using the four ribonucleoside triphosphates as substrates. The polypeptide is DNA-directed RNA polymerase subunit alpha (Aliarcobacter butzleri (strain RM4018) (Arcobacter butzleri)).